Consider the following 327-residue polypeptide: 7,8-didemethyl-8-hydroxy-5-deazariboflavin synthase (327 aa).

A Radical SAM core domain is found at 6-244 (ITFSRNVFLP…EEVAVQVAPN (239 aa)). Positions 20, 24, and 27 each coordinate [4Fe-4S] cluster.

The protein belongs to the radical SAM superfamily. CofG family. In terms of assembly, consists of two subunits, CofG and CofH. [4Fe-4S] cluster is required as a cofactor.

The catalysed reaction is 5-amino-5-(4-hydroxybenzyl)-6-(D-ribitylimino)-5,6-dihydrouracil + S-adenosyl-L-methionine = 7,8-didemethyl-8-hydroxy-5-deazariboflavin + 5'-deoxyadenosine + L-methionine + NH4(+) + H(+). It functions in the pathway cofactor biosynthesis; coenzyme F0 biosynthesis. Its function is as follows. Catalyzes the radical-mediated synthesis of 7,8-didemethyl-8-hydroxy-5-deazariboflavin from 5-amino-5-(4-hydroxybenzyl)-6-(D-ribitylimino)-5,6-dihydrouracil. The chain is 7,8-didemethyl-8-hydroxy-5-deazariboflavin synthase from Methanosphaerula palustris (strain ATCC BAA-1556 / DSM 19958 / E1-9c).